Reading from the N-terminus, the 398-residue chain is MARNIKVEELFQTPVEKQRIELVERKGIGHPDSISDGLAEAVSRALCREYISKCGAVLHHNTDETQIVAGRSSPRFGGGEILQPIYILLVGRATKEFEGVDLATESVALQAARQYLKNTLVNMDLERDVIMDCKLGTGSSDLRDVFKRDRIPVANDTSFGVGHAPFSELENLVYNTERQLLTDLKSRMPGIGEDMKVMGLRDGEDITLTICSGMIGRYIDDLDSYINMTQEMQTYVEEMATRYTERNVKVCINTGDNLKTSSIFLTVTGTSAEMGDDGSVGRGNRCNGLITPNRPMSMEATSGKNPINHIGKIYNLLSTQMARDIVKQVPEVQDVYIRLLSQIGKPIDQPLVASAQVIPKEGTSFAKVKAEAEVVMDDWLSNVTKITEMVIKGELDTF.

136 to 141 (GTGSSD) contributes to the ATP binding site.

The protein belongs to the AdoMet synthase 2 family. Mg(2+) serves as cofactor.

It carries out the reaction L-methionine + ATP + H2O = S-adenosyl-L-methionine + phosphate + diphosphate. It functions in the pathway amino-acid biosynthesis; S-adenosyl-L-methionine biosynthesis; S-adenosyl-L-methionine from L-methionine: step 1/1. In terms of biological role, catalyzes the formation of S-adenosylmethionine from methionine and ATP. This is S-adenosylmethionine synthase from Methanosarcina barkeri (strain Fusaro / DSM 804).